We begin with the raw amino-acid sequence, 419 residues long: UDP-N-acetylglucosamine 1-carboxyvinyltransferase (419 aa).

Phosphoenolpyruvate is bound at residue 22 to 23 (KN). Position 91 (Arg-91) interacts with UDP-N-acetyl-alpha-D-glucosamine. The Proton donor role is filled by Cys-115. At Cys-115 the chain carries 2-(S-cysteinyl)pyruvic acid O-phosphothioketal. UDP-N-acetyl-alpha-D-glucosamine is bound by residues 120 to 124 (RPVDL), 160 to 163 (KVSV), Asp-305, and Ile-327.

It belongs to the EPSP synthase family. MurA subfamily.

It localises to the cytoplasm. It catalyses the reaction phosphoenolpyruvate + UDP-N-acetyl-alpha-D-glucosamine = UDP-N-acetyl-3-O-(1-carboxyvinyl)-alpha-D-glucosamine + phosphate. It functions in the pathway cell wall biogenesis; peptidoglycan biosynthesis. Its function is as follows. Cell wall formation. Adds enolpyruvyl to UDP-N-acetylglucosamine. The protein is UDP-N-acetylglucosamine 1-carboxyvinyltransferase of Sodalis glossinidius (strain morsitans).